The sequence spans 224 residues: Vacuolar protein-sorting-associated protein 24 (224 aa).

Lys-203 is covalently cross-linked (Glycyl lysine isopeptide (Lys-Gly) (interchain with G-Cter in ubiquitin)).

Belongs to the SNF7 family. Core component of the ESCRT-III complex (endosomal sorting required for transport complex III). ESCRT-III appears to be sequentially assembled as a flat lattice on the endosome membrane and forms a transient 450 kDa complex that contains DID4, oligomerized SNF7, VPS20 and VPS24. SNF7 oligomerization into a membrane-associated filament is nucleated by association of SNF7 with VPS20; the process is terminated through association of VPS24, possibly by capping the SNF7 filament. VPS24 subsequently associates with DID4/VPS2. Interacts with the VPS4. Interacts with DID2.

The protein resides in the endosome membrane. It localises to the endomembrane system. Class E VPS protein implicated in concentration and sorting of cargo proteins of the multivesicular body (MVB) for incorporation into intralumenal vesicles. The lumenal sequestrated membrane proteins will be targeted into the vacuole after fusion of the endosome with the vacuole. Acts a component of the ESCRT-III complex, which appears to be critical for late steps in MVB sorting, such as membrane invagination and final cargo sorting and recruitment oflate-acting components of the sorting machinery. The MVB pathway requires the sequential function of ESCRT-O, -I,-II and -III complex assemblies. The DID4/VPS2-VPS24 subcomplex is required for the VPS4-dependent dissociation of ESCRT-III. In Saccharomyces cerevisiae (strain ATCC 204508 / S288c) (Baker's yeast), this protein is Vacuolar protein-sorting-associated protein 24 (VPS24).